A 475-amino-acid chain; its full sequence is UDP-N-acetylmuramate--L-alanine ligase (475 aa).

An ATP-binding site is contributed by 125 to 131 (GTHGKTT).

It belongs to the MurCDEF family.

The protein localises to the cytoplasm. It carries out the reaction UDP-N-acetyl-alpha-D-muramate + L-alanine + ATP = UDP-N-acetyl-alpha-D-muramoyl-L-alanine + ADP + phosphate + H(+). Its pathway is cell wall biogenesis; peptidoglycan biosynthesis. Functionally, cell wall formation. The sequence is that of UDP-N-acetylmuramate--L-alanine ligase from Haemophilus influenzae (strain PittGG).